Consider the following 179-residue polypeptide: Transcription factor BOA15 (179 aa).

The protein localises to the nucleus. Its function is as follows. Transcription factor that probably coregulates the gene clusters that mediates the biosynthesis of botcinin acid and its botcinin derivatives, acetate-derived polyketides that contribute to virulence when combined with the sesquiterpene botrydial. Botcinin acid and its derivatives have been shown to induce chlorosis and necrosis during host plant infection, but also have antifungal activities. The polypeptide is Transcription factor BOA15 (Botryotinia fuckeliana (strain B05.10) (Noble rot fungus)).